The following is a 144-amino-acid chain: Transcription antitermination protein NusB (144 aa).

The protein belongs to the NusB family.

Its function is as follows. Involved in transcription antitermination. Required for transcription of ribosomal RNA (rRNA) genes. Binds specifically to the boxA antiterminator sequence of the ribosomal RNA (rrn) operons. The polypeptide is Transcription antitermination protein NusB (Pasteurella multocida (strain Pm70)).